A 305-amino-acid chain; its full sequence is UDP-3-O-acyl-N-acetylglucosamine deacetylase (305 aa).

Zn(2+) contacts are provided by His-78, His-237, and Asp-241. The active-site Proton donor is His-264.

Belongs to the LpxC family. Requires Zn(2+) as cofactor.

It carries out the reaction a UDP-3-O-[(3R)-3-hydroxyacyl]-N-acetyl-alpha-D-glucosamine + H2O = a UDP-3-O-[(3R)-3-hydroxyacyl]-alpha-D-glucosamine + acetate. It participates in glycolipid biosynthesis; lipid IV(A) biosynthesis; lipid IV(A) from (3R)-3-hydroxytetradecanoyl-[acyl-carrier-protein] and UDP-N-acetyl-alpha-D-glucosamine: step 2/6. In terms of biological role, catalyzes the hydrolysis of UDP-3-O-myristoyl-N-acetylglucosamine to form UDP-3-O-myristoylglucosamine and acetate, the committed step in lipid A biosynthesis. The protein is UDP-3-O-acyl-N-acetylglucosamine deacetylase of Burkholderia ambifaria (strain ATCC BAA-244 / DSM 16087 / CCUG 44356 / LMG 19182 / AMMD) (Burkholderia cepacia (strain AMMD)).